Here is a 237-residue protein sequence, read N- to C-terminus: Urease accessory protein UreF (237 aa).

This sequence belongs to the UreF family. UreD, UreF and UreG form a complex that acts as a GTP-hydrolysis-dependent molecular chaperone, activating the urease apoprotein by helping to assemble the nickel containing metallocenter of UreC. The UreE protein probably delivers the nickel.

Its subcellular location is the cytoplasm. Functionally, required for maturation of urease via the functional incorporation of the urease nickel metallocenter. This Rhodopseudomonas palustris (strain HaA2) protein is Urease accessory protein UreF.